Reading from the N-terminus, the 185-residue chain is MLNDVINEYEAHLKKATEALRHHLASIRTGRASAALVEHLHVEAYGTNMPLNQLANISVPEPRMIIIQPYDTGMIKAIEKAIQQSDLGLNPSNDGRIIRLPVPPLTEERRRELVKMVRHRVEEVKVSVRNQRRDAIDDLKKLEADKLISEDELHRGQERIQQLTDRCNRELDQIGAEKEAEVMAI.

Belongs to the RRF family.

It localises to the cytoplasm. In terms of biological role, responsible for the release of ribosomes from messenger RNA at the termination of protein biosynthesis. May increase the efficiency of translation by recycling ribosomes from one round of translation to another. This is Ribosome-recycling factor from Chloroflexus aggregans (strain MD-66 / DSM 9485).